The primary structure comprises 563 residues: Urocanate hydratase (563 aa).

NAD(+) is bound by residues 53–54 (GG), Gln131, 177–179 (GMG), Glu197, Arg202, 243–244 (NA), 264–268 (QTSAH), 274–275 (YL), and Tyr323. Residue Cys411 is part of the active site. Gly493 serves as a coordination point for NAD(+).

The protein belongs to the urocanase family. It depends on NAD(+) as a cofactor.

The protein resides in the cytoplasm. It catalyses the reaction 4-imidazolone-5-propanoate = trans-urocanate + H2O. It functions in the pathway amino-acid degradation; L-histidine degradation into L-glutamate; N-formimidoyl-L-glutamate from L-histidine: step 2/3. In terms of biological role, catalyzes the conversion of urocanate to 4-imidazolone-5-propionate. This chain is Urocanate hydratase, found in Yersinia enterocolitica serotype O:8 / biotype 1B (strain NCTC 13174 / 8081).